Here is a 943-residue protein sequence, read N- to C-terminus: Isoleucine--tRNA ligase (943 aa).

Residues 58–68 carry the 'HIGH' region motif; it reads PYANGKIHIGH. Glu567 provides a ligand contact to L-isoleucyl-5'-AMP. The 'KMSKS' region signature appears at 608–612; that stretch reads KMSKS. ATP is bound at residue Lys611. Residues Cys906, Cys909, Cys926, and Cys929 each coordinate Zn(2+).

Belongs to the class-I aminoacyl-tRNA synthetase family. IleS type 1 subfamily. As to quaternary structure, monomer. Zn(2+) is required as a cofactor.

Its subcellular location is the cytoplasm. It carries out the reaction tRNA(Ile) + L-isoleucine + ATP = L-isoleucyl-tRNA(Ile) + AMP + diphosphate. In terms of biological role, catalyzes the attachment of isoleucine to tRNA(Ile). As IleRS can inadvertently accommodate and process structurally similar amino acids such as valine, to avoid such errors it has two additional distinct tRNA(Ile)-dependent editing activities. One activity is designated as 'pretransfer' editing and involves the hydrolysis of activated Val-AMP. The other activity is designated 'posttransfer' editing and involves deacylation of mischarged Val-tRNA(Ile). The chain is Isoleucine--tRNA ligase from Pseudomonas putida (strain GB-1).